The sequence spans 66 residues: Large ribosomal subunit protein uL29c (66 aa).

This sequence belongs to the universal ribosomal protein uL29 family.

It is found in the plastid. It localises to the chloroplast. This is Large ribosomal subunit protein uL29c from Gracilaria tenuistipitata var. liui (Red alga).